The chain runs to 192 residues: Xanthine phosphoribosyltransferase (192 aa).

Xanthine-binding residues include Leu-20 and Asn-27. 128 to 132 (ANGQA) is a 5-phospho-alpha-D-ribose 1-diphosphate binding site. Lys-156 is a xanthine binding site.

Belongs to the purine/pyrimidine phosphoribosyltransferase family. Xpt subfamily. Homodimer.

It localises to the cytoplasm. The catalysed reaction is XMP + diphosphate = xanthine + 5-phospho-alpha-D-ribose 1-diphosphate. Its pathway is purine metabolism; XMP biosynthesis via salvage pathway; XMP from xanthine: step 1/1. Functionally, converts the preformed base xanthine, a product of nucleic acid breakdown, to xanthosine 5'-monophosphate (XMP), so it can be reused for RNA or DNA synthesis. This is Xanthine phosphoribosyltransferase from Lacticaseibacillus casei (strain BL23) (Lactobacillus casei).